Reading from the N-terminus, the 399-residue chain is Glutamyl-tRNA reductase (399 aa).

Residues 45–48, serine 101, 106–108, and glutamine 112 contribute to the substrate site; these read TCNR and EDQ. Cysteine 46 (nucleophile) is an active-site residue. 177–182 lines the NADP(+) pocket; it reads GFGKIG.

It belongs to the glutamyl-tRNA reductase family. In terms of assembly, homodimer.

It catalyses the reaction (S)-4-amino-5-oxopentanoate + tRNA(Glu) + NADP(+) = L-glutamyl-tRNA(Glu) + NADPH + H(+). It functions in the pathway porphyrin-containing compound metabolism; protoporphyrin-IX biosynthesis; 5-aminolevulinate from L-glutamyl-tRNA(Glu): step 1/2. Catalyzes the NADPH-dependent reduction of glutamyl-tRNA(Glu) to glutamate 1-semialdehyde (GSA). In Clostridium kluyveri (strain ATCC 8527 / DSM 555 / NBRC 12016 / NCIMB 10680 / K1), this protein is Glutamyl-tRNA reductase.